Reading from the N-terminus, the 215-residue chain is uncharacterized protein (215 aa).

A run of 6 helical transmembrane segments spans residues 21–40, 50–69, 95–117, 122–144, 156–178, and 183–205; these read IIKY…VLIN, LIFS…SVIF, FFAI…YVLF, LEII…LVVL, ANFV…GLIL, and LQLI…FLSS.

Belongs to the CcmB/CycW/HelB family.

It localises to the cell membrane. This is an uncharacterized protein from Rickettsia conorii (strain ATCC VR-613 / Malish 7).